Consider the following 65-residue polypeptide: NADH dehydrogenase [ubiquinone] 1 alpha subcomplex subunit 1 (65 aa).

Residues 3–23 (LVWLEAMLPLGIIGGMLCIMG) form a helical membrane-spanning segment.

This sequence belongs to the complex I NDUFA1 subunit family. Complex I is composed of at least 49 different subunits.

It localises to the mitochondrion inner membrane. Its function is as follows. Accessory subunit of the mitochondrial membrane respiratory chain NADH dehydrogenase (Complex I), that is believed not to be involved in catalysis. Complex I functions in the transfer of electrons from NADH to the respiratory chain. The immediate electron acceptor for the enzyme is believed to be ubiquinone. The protein is NADH dehydrogenase [ubiquinone] 1 alpha subcomplex subunit 1 of Arabidopsis thaliana (Mouse-ear cress).